The primary structure comprises 104 residues: Small ribosomal subunit protein bS16 (104 aa).

The protein belongs to the bacterial ribosomal protein bS16 family.

The sequence is that of Small ribosomal subunit protein bS16 from Wolbachia pipientis subsp. Culex pipiens (strain wPip).